The following is a 1171-amino-acid chain: APC-related protein 1 (1171 aa).

The tract at residues 1 to 54 (MSSSSSDENETTIHSSSNPGSSGIYSQLKAGSSKRPSVRHDVSDAEDDEEPYEG) is disordered. Residues 1–481 (MSSSSSDENE…LSLRATRASP (481 aa)) form a required for interaction with bar-1 and hmp-2 region. Over residues 15-26 (SSSNPGSSGIYS) the composition is skewed to low complexity. One copy of the ARM repeat lies at 312–356 (NCLKVLANILSPDARFTTLVDSASGILKYVSQYLATNSSHLELRS). 6 disordered regions span residues 587–617 (PVDD…NPGS), 662–699 (HPED…GTTV), 720–741 (RKTS…LEVE), 767–822 (EEMP…EMTT), 837–936 (PRSR…TMRI), and 995–1030 (SSGS…SSLP). Residues 591–1171 (DLDIPTSTVM…NPKQMLVTIV (581 aa)) form a required for interaction with pry-1 region. 2 stretches are compositionally biased toward polar residues: residues 595 to 617 (PTST…NPGS) and 666 to 697 (NQMT…SDGT). The segment covering 788–799 (FSPSQKTTSSPA) has biased composition (polar residues). The segment covering 857-874 (EPDRSSHSKNEEADRRDA) has biased composition (basic and acidic residues). Composition is skewed to polar residues over residues 890–913 (RGSS…SSED) and 1002–1028 (LQKA…SVSS).

It belongs to the adenomatous polyposis coli (APC) family. As to quaternary structure, interacts (via N-terminus) with bar-1 and hmp-2; the interaction with hmp-2 is relatively weak. Interacts (via C-terminus) with pry-1 (via N-terminus). Probably associates with bar-1, gsk-3, pry-1 in a complex.

Its subcellular location is the cell junction. The protein localises to the adherens junction. The protein resides in the cytoplasm. It is found in the nucleus. Its function is as follows. Has a role in endoderm cell specification and pharyngeal development. Required for the migration of epithelial cells, organization of the anterior seam cells and ceh-13 expression during embryo morphogenesis. Prevents hyperactivation of the Wnt signaling pathway during endoderm development, probably by preventing hmp-2 nuclear translocation. During larval development, apr-1 is required for expression of lin-39 in P3-8.p. Shown to negatively regulate Wnt signaling in vulval precursor cells. Has a role in cell division by establishing the polarity of the mother cell which forms the asymmetries of the daughter nuclei. Thought to regulate export of wrm-1 from the nucleus possibly as part of a complex involving pry-1. This chain is APC-related protein 1, found in Caenorhabditis briggsae.